The chain runs to 328 residues: Type II secretion system protein K (328 aa).

The propeptide at 1-7 is leader sequence; sequence MRSRQRG. Residues 8-28 traverse the membrane as a helical segment; sequence AALLVVLLILALMVTIAAVIT. Over 29–328 the chain is Periplasmic; the sequence is ERTGKAFLRT…QYGGYRTVNP (300 aa).

The protein belongs to the GSP K family. Type II secretion is composed of four main components: the outer membrane complex, the inner membrane complex, the cytoplasmic secretion ATPase and the periplasm-spanning pseudopilus. Interacts with core component OutG. In terms of processing, cleaved by prepilin peptidase.

Its subcellular location is the cell inner membrane. Its function is as follows. Component of the type II secretion system required for the energy-dependent secretion of extracellular factors such as proteases and toxins from the periplasm. Plays a role in pseudopilus assembly and seems to control its length. Interacts with the pseudopilus tip complex that is critical for the recognition and binding of secretion substrates. In Pectobacterium carotovorum subsp. carotovorum (Erwinia carotovora subsp. carotovora), this protein is Type II secretion system protein K (outK).